Reading from the N-terminus, the 197-residue chain is Autophagy-related protein 33 (197 aa).

A run of 3 helical transmembrane segments spans residues 10–30 (GIAV…SLIT), 52–72 (AATA…FGAP), and 78–98 (PYLL…GCAS). Ser127 and Ser129 each carry phosphoserine. Residues 135–148 (EDNHASENTPRDGK) are compositionally biased toward basic and acidic residues. Positions 135–154 (EDNHASENTPRDGKPAATTV) are disordered. A helical transmembrane segment spans residues 172–192 (LIAATAIAIVGFVQAVIGVYG).

The protein belongs to the ATG33 family.

The protein resides in the mitochondrion membrane. Functionally, involved in the selective degradation of mitochondria via autophagy during starvation and at post-log phase. The sequence is that of Autophagy-related protein 33 (ATG33) from Saccharomyces cerevisiae (strain ATCC 204508 / S288c) (Baker's yeast).